Consider the following 384-residue polypeptide: ATP phosphoribosyltransferase regulatory subunit (384 aa).

This sequence belongs to the class-II aminoacyl-tRNA synthetase family. HisZ subfamily. In terms of assembly, heteromultimer composed of HisG and HisZ subunits.

Its subcellular location is the cytoplasm. It functions in the pathway amino-acid biosynthesis; L-histidine biosynthesis; L-histidine from 5-phospho-alpha-D-ribose 1-diphosphate: step 1/9. Required for the first step of histidine biosynthesis. May allow the feedback regulation of ATP phosphoribosyltransferase activity by histidine. This Rhodospirillum rubrum (strain ATCC 11170 / ATH 1.1.1 / DSM 467 / LMG 4362 / NCIMB 8255 / S1) protein is ATP phosphoribosyltransferase regulatory subunit.